A 338-amino-acid chain; its full sequence is Methionine import ATP-binding protein MetN 2 (338 aa).

The ABC transporter domain occupies 2 to 242; sequence IEIEKVCVDF…PQHAFTQQLV (241 aa). 39 to 46 is a binding site for ATP; sequence GTSGAGKS.

The protein belongs to the ABC transporter superfamily. Methionine importer (TC 3.A.1.24) family. The complex is composed of two ATP-binding proteins (MetN), two transmembrane proteins (MetI) and a solute-binding protein (MetQ).

Its subcellular location is the cell inner membrane. The catalysed reaction is L-methionine(out) + ATP + H2O = L-methionine(in) + ADP + phosphate + H(+). It carries out the reaction D-methionine(out) + ATP + H2O = D-methionine(in) + ADP + phosphate + H(+). Part of the ABC transporter complex MetNIQ involved in methionine import. Responsible for energy coupling to the transport system. This chain is Methionine import ATP-binding protein MetN 2, found in Salmonella paratyphi A (strain ATCC 9150 / SARB42).